A 469-amino-acid chain; its full sequence is 3-isopropylmalate dehydratase large subunit (469 aa).

[4Fe-4S] cluster is bound by residues C347, C407, and C410.

This sequence belongs to the aconitase/IPM isomerase family. LeuC type 1 subfamily. In terms of assembly, heterodimer of LeuC and LeuD. Requires [4Fe-4S] cluster as cofactor.

The catalysed reaction is (2R,3S)-3-isopropylmalate = (2S)-2-isopropylmalate. It functions in the pathway amino-acid biosynthesis; L-leucine biosynthesis; L-leucine from 3-methyl-2-oxobutanoate: step 2/4. Catalyzes the isomerization between 2-isopropylmalate and 3-isopropylmalate, via the formation of 2-isopropylmaleate. The sequence is that of 3-isopropylmalate dehydratase large subunit from Photorhabdus laumondii subsp. laumondii (strain DSM 15139 / CIP 105565 / TT01) (Photorhabdus luminescens subsp. laumondii).